Reading from the N-terminus, the 234-residue chain is HTH-type transcriptional repressor FabR (234 aa).

Residues 29–89 (KTRRSLVEAA…TMVDESGLML (61 aa)) form the HTH tetR-type domain. The segment at residues 52-71 (SLREVAREAGIAPTSFYRHF) is a DNA-binding region (H-T-H motif).

Homodimer.

The protein localises to the cytoplasm. With respect to regulation, has been suggested to require either an unsaturated acyl carrier protein or unsaturated acyl-CoA (but not their saturated equivalents) for DNA-binding. Another group suggests that unsaturated thioesters are not essential but act instead to enhance DNA-binding. Its function is as follows. Binds the promoter region of at least fabA and fabB, but probably not yqfA. Represses the transcription of fabA and fabB, involved in unsaturated fatty acid (UFA) biosynthesis. By controlling UFA production, FabR directly influences the physical properties of the membrane bilayer. The protein is HTH-type transcriptional repressor FabR of Escherichia coli (strain K12).